Reading from the N-terminus, the 192-residue chain is NF-kappa-B inhibitor-interacting Ras-like protein 1 (192 aa).

11-18 (GLLSVGKT) provides a ligand contact to GTP. The short motif at 35-43 (DCETLEDVY) is the Effector region element. The segment at 58–93 (HLYDTRGLQKGVELPKHYFSFADGFVLVYSVNNLES) is interactions with NFKBIA and NFKBIB. Residues 61-65 (DTRGL) and 120-123 (NKLD) each bind GTP. The tract at residues 168 to 192 (LSQPQSKSSFPLPGRKNKGNSNPEN) is disordered.

This sequence belongs to the small GTPase superfamily. Ras family. KappaB-Ras subfamily. As to quaternary structure, interacts with both NF-kappa-B inhibitor alpha (NFKBIA) and beta (NFKBIB) in vitro. However, it probably only interacts with NFKBIB in vivo. Forms a complex with NFKBIB and NF-kappa-B heterodimer (p50/NFKB1 and p65/RELA). Also interacts with c-Rel (REL).

The protein resides in the cytoplasm. Atypical Ras-like protein that acts as a potent regulator of NF-kappa-B activity by preventing the degradation of NF-kappa-B inhibitor beta (NFKBIB) by most signals, explaining why NFKBIB is more resistant to degradation. May act by blocking phosphorylation of NFKBIB and mediating cytoplasmic retention of p65/RELA NF-kappa-B subunit. It is unclear whether it acts as a GTPase. Both GTP- and GDP-bound forms block phosphorylation of NFKBIB. The chain is NF-kappa-B inhibitor-interacting Ras-like protein 1 (Nkiras1) from Mus musculus (Mouse).